The primary structure comprises 330 residues: Glycerol-3-phosphate dehydrogenase [NAD(P)+] (330 aa).

Ser11, Phe12, Arg32, and Lys106 together coordinate NADPH. Sn-glycerol 3-phosphate-binding residues include Lys106, Gly133, and Ser135. Ala137 contacts NADPH. The sn-glycerol 3-phosphate site is built by Lys188, Asp241, Ser251, Arg252, and Asn253. The active-site Proton acceptor is the Lys188. Arg252 contacts NADPH. NADPH contacts are provided by Val276 and Glu278.

This sequence belongs to the NAD-dependent glycerol-3-phosphate dehydrogenase family.

Its subcellular location is the cytoplasm. It catalyses the reaction sn-glycerol 3-phosphate + NAD(+) = dihydroxyacetone phosphate + NADH + H(+). The catalysed reaction is sn-glycerol 3-phosphate + NADP(+) = dihydroxyacetone phosphate + NADPH + H(+). Its pathway is membrane lipid metabolism; glycerophospholipid metabolism. Its function is as follows. Catalyzes the reduction of the glycolytic intermediate dihydroxyacetone phosphate (DHAP) to sn-glycerol 3-phosphate (G3P), the key precursor for phospholipid synthesis. This Clostridium botulinum (strain Alaska E43 / Type E3) protein is Glycerol-3-phosphate dehydrogenase [NAD(P)+].